Here is a 414-residue protein sequence, read N- to C-terminus: Cytochrome c-554 (414 aa).

The first 24 residues, 1–24, serve as a signal peptide directing secretion; the sequence is MQSSRPSDRQLAIVVSVAVGIVVA. 15 residues coordinate heme: M110, C131, C134, H135, M154, C179, C182, H183, M283, C294, C297, H298, C378, C381, and H382.

Post-translationally, binds 4 heme groups per subunit. In terms of processing, the N-terminus is blocked.

The protein localises to the periplasm. Functionally, serves as the immediate electron donor to the oxidized BChl2 (bacteriochlorophyll dimer) that is oxidized in the first step of light-induced charge separation. Can also oxidize low-potential substrates. The polypeptide is Cytochrome c-554 (puf2C) (Chloroflexus aurantiacus (strain ATCC 29366 / DSM 635 / J-10-fl)).